The primary structure comprises 516 residues: Lysophosphatidylcholine acyltransferase 2B (516 aa).

N-linked (GlcNAc...) asparagine glycosylation occurs at asparagine 28. 3 consecutive transmembrane segments (helical) span residues 44 to 64 (THLSAWRWACTIILGTVLVPV), 68 to 88 (CIVFLLILLWPVAVLSAINLP), and 102 to 122 (LIKSALVFLFRLGFFFAGFLV). Positions 142–147 (HSTFFD) match the HXXXXD motif motif. EF-hand domains lie at 387–422 (PISEPLRQLFSLFDRNQDGTIDFREYVIGLTVLCNP) and 424–459 (NTEKILQMSFKLFDLDEDGYVTERELTTMLQAAFGV). Ca(2+)-binding residues include aspartate 400, asparagine 402, aspartate 404, threonine 406, glutamate 411, aspartate 437, aspartate 439, aspartate 441, tyrosine 443, and glutamate 448.

It belongs to the 1-acyl-sn-glycerol-3-phosphate acyltransferase family.

It is found in the membrane. It participates in lipid metabolism; phospholipid metabolism. Probable acetyltransferase. The sequence is that of Lysophosphatidylcholine acyltransferase 2B (Lpcat2b) from Mus musculus (Mouse).